The sequence spans 880 residues: Alanine--tRNA ligase (880 aa).

4 residues coordinate Zn(2+): His566, His570, Cys668, and His672.

The protein belongs to the class-II aminoacyl-tRNA synthetase family. Requires Zn(2+) as cofactor.

It localises to the cytoplasm. The catalysed reaction is tRNA(Ala) + L-alanine + ATP = L-alanyl-tRNA(Ala) + AMP + diphosphate. Functionally, catalyzes the attachment of alanine to tRNA(Ala) in a two-step reaction: alanine is first activated by ATP to form Ala-AMP and then transferred to the acceptor end of tRNA(Ala). Also edits incorrectly charged Ser-tRNA(Ala) and Gly-tRNA(Ala) via its editing domain. The chain is Alanine--tRNA ligase from Alkaliphilus oremlandii (strain OhILAs) (Clostridium oremlandii (strain OhILAs)).